The sequence spans 89 residues: Small ribosomal subunit protein uS15 (89 aa).

It belongs to the universal ribosomal protein uS15 family. Part of the 30S ribosomal subunit. Forms a bridge to the 50S subunit in the 70S ribosome, contacting the 23S rRNA.

Functionally, one of the primary rRNA binding proteins, it binds directly to 16S rRNA where it helps nucleate assembly of the platform of the 30S subunit by binding and bridging several RNA helices of the 16S rRNA. Its function is as follows. Forms an intersubunit bridge (bridge B4) with the 23S rRNA of the 50S subunit in the ribosome. The chain is Small ribosomal subunit protein uS15 from Ureaplasma parvum serovar 3 (strain ATCC 27815 / 27 / NCTC 11736).